Here is a 198-residue protein sequence, read N- to C-terminus: Methyl-coenzyme M reductase I operon protein C (198 aa).

As to quaternary structure, MCR is composed of three subunits: alpha, beta, and gamma. The function of proteins C and D is not known.

The polypeptide is Methyl-coenzyme M reductase I operon protein C (mcrC) (Methanothermobacter marburgensis (strain ATCC BAA-927 / DSM 2133 / JCM 14651 / NBRC 100331 / OCM 82 / Marburg) (Methanobacterium thermoautotrophicum)).